A 601-amino-acid polypeptide reads, in one-letter code: 4-hydroxy-3-methylbut-2-en-1-yl diphosphate synthase (flavodoxin) (601 aa).

The [4Fe-4S] cluster site is built by cysteine 507, cysteine 510, cysteine 542, and glutamate 549.

It belongs to the IspG family. [4Fe-4S] cluster serves as cofactor.

It carries out the reaction (2E)-4-hydroxy-3-methylbut-2-enyl diphosphate + oxidized [flavodoxin] + H2O + 2 H(+) = 2-C-methyl-D-erythritol 2,4-cyclic diphosphate + reduced [flavodoxin]. It participates in isoprenoid biosynthesis; isopentenyl diphosphate biosynthesis via DXP pathway; isopentenyl diphosphate from 1-deoxy-D-xylulose 5-phosphate: step 5/6. Its function is as follows. Converts 2C-methyl-D-erythritol 2,4-cyclodiphosphate (ME-2,4cPP) into 1-hydroxy-2-methyl-2-(E)-butenyl 4-diphosphate. This is 4-hydroxy-3-methylbut-2-en-1-yl diphosphate synthase (flavodoxin) from Chlamydia muridarum (strain MoPn / Nigg).